We begin with the raw amino-acid sequence, 204 residues long: MKVKICGITDVETAKCACEYGADAIGFVFAESKRKITLGLAKEIIGKLPAHVLKIGVFVNESVEVIQKIADECGLTHVQLHGDEENHQIRRLNIPSIKSLGVTSESDMKSAQAYETDYILFDSPKEKFHGGNGKTFSWELLEHMPKELRKKTILAGGLNILNIEEAIRTVRPYMVDVSSGVETEGKKDLKKIKQFIIKSKECSK.

It belongs to the TrpF family.

The catalysed reaction is N-(5-phospho-beta-D-ribosyl)anthranilate = 1-(2-carboxyphenylamino)-1-deoxy-D-ribulose 5-phosphate. It participates in amino-acid biosynthesis; L-tryptophan biosynthesis; L-tryptophan from chorismate: step 3/5. The chain is N-(5'-phosphoribosyl)anthranilate isomerase from Bacillus cereus (strain G9842).